Here is a 739-residue protein sequence, read N- to C-terminus: Phosphoribosylformylglycinamidine synthase subunit PurL (739 aa).

His-49 is a catalytic residue. Tyr-52 and Lys-91 together coordinate ATP. Glu-93 is a binding site for Mg(2+). Residues 94–97 and Arg-116 contribute to the substrate site; that span reads SHNH. His-95 functions as the Proton acceptor in the catalytic mechanism. Asp-117 contributes to the Mg(2+) binding site. Gln-240 is a substrate binding site. Asp-268 is a Mg(2+) binding site. 312–314 lines the substrate pocket; sequence ESQ. Residues Asp-493 and Gly-530 each contribute to the ATP site. Asn-531 lines the Mg(2+) pocket. Residue Ser-533 coordinates substrate.

The protein belongs to the FGAMS family. Monomer. Part of the FGAM synthase complex composed of 1 PurL, 1 PurQ and 2 PurS subunits.

The protein resides in the cytoplasm. The enzyme catalyses N(2)-formyl-N(1)-(5-phospho-beta-D-ribosyl)glycinamide + L-glutamine + ATP + H2O = 2-formamido-N(1)-(5-O-phospho-beta-D-ribosyl)acetamidine + L-glutamate + ADP + phosphate + H(+). Its pathway is purine metabolism; IMP biosynthesis via de novo pathway; 5-amino-1-(5-phospho-D-ribosyl)imidazole from N(2)-formyl-N(1)-(5-phospho-D-ribosyl)glycinamide: step 1/2. Its function is as follows. Part of the phosphoribosylformylglycinamidine synthase complex involved in the purines biosynthetic pathway. Catalyzes the ATP-dependent conversion of formylglycinamide ribonucleotide (FGAR) and glutamine to yield formylglycinamidine ribonucleotide (FGAM) and glutamate. The FGAM synthase complex is composed of three subunits. PurQ produces an ammonia molecule by converting glutamine to glutamate. PurL transfers the ammonia molecule to FGAR to form FGAM in an ATP-dependent manner. PurS interacts with PurQ and PurL and is thought to assist in the transfer of the ammonia molecule from PurQ to PurL. This chain is Phosphoribosylformylglycinamidine synthase subunit PurL, found in Parvibaculum lavamentivorans (strain DS-1 / DSM 13023 / NCIMB 13966).